A 156-amino-acid polypeptide reads, in one-letter code: U4/U6.U5 small nuclear ribonucleoprotein 27 kDa protein (156 aa).

The segment at 1–98 (MGRSRSRSPE…IAAEDLEGKT (98 aa)) is disordered. Residues 13-59 (RERRRSRSASRERERRRRERSRSRERRRSRSRSPHRRRSRSPRRHRS) are compositionally biased toward basic residues. Over residues 66–98 (RLKDRRDDDKKDSKESKGAKERQIAAEDLEGKT) the composition is skewed to basic and acidic residues.

The protein belongs to the SNUT3 family. Part of a tri-snRNP complex.

It localises to the nucleus. May play a role in mRNA splicing. The polypeptide is U4/U6.U5 small nuclear ribonucleoprotein 27 kDa protein (snrnp27) (Xenopus tropicalis (Western clawed frog)).